Here is a 182-residue protein sequence, read N- to C-terminus: MKHTSLPEIRSTTVIGVIRNGQAALGSDGQMTLGNTVVKHSTKKIRRLYQGKLLAGFAGATADALTLLDRFEAKLEAFGGKLERASVELARDWRTDKYLRRLEAMIAIVSNDRALIISGTGDVIEPEDGIVAIGSGSMYALAAARSLMKHTSLSAQEIVQESLAIAADICIYTNNHIVVEEL.

The active site involves T12. Residues A167, C170, and T173 each coordinate Na(+).

The protein belongs to the peptidase T1B family. HslV subfamily. As to quaternary structure, a double ring-shaped homohexamer of HslV is capped on each side by a ring-shaped HslU homohexamer. The assembly of the HslU/HslV complex is dependent on binding of ATP.

The protein resides in the cytoplasm. It catalyses the reaction ATP-dependent cleavage of peptide bonds with broad specificity.. Its activity is regulated as follows. Allosterically activated by HslU binding. In terms of biological role, protease subunit of a proteasome-like degradation complex believed to be a general protein degrading machinery. In Chlorobium chlorochromatii (strain CaD3), this protein is ATP-dependent protease subunit HslV.